Here is a 169-residue protein sequence, read N- to C-terminus: NAD(P)H-quinone oxidoreductase subunit J, chloroplastic (169 aa).

Belongs to the complex I 30 kDa subunit family. In terms of assembly, NDH is composed of at least 16 different subunits, 5 of which are encoded in the nucleus.

Its subcellular location is the plastid. The protein localises to the chloroplast thylakoid membrane. It carries out the reaction a plastoquinone + NADH + (n+1) H(+)(in) = a plastoquinol + NAD(+) + n H(+)(out). It catalyses the reaction a plastoquinone + NADPH + (n+1) H(+)(in) = a plastoquinol + NADP(+) + n H(+)(out). NDH shuttles electrons from NAD(P)H:plastoquinone, via FMN and iron-sulfur (Fe-S) centers, to quinones in the photosynthetic chain and possibly in a chloroplast respiratory chain. The immediate electron acceptor for the enzyme in this species is believed to be plastoquinone. Couples the redox reaction to proton translocation, and thus conserves the redox energy in a proton gradient. This chain is NAD(P)H-quinone oxidoreductase subunit J, chloroplastic, found in Marchantia polymorpha (Common liverwort).